Reading from the N-terminus, the 702-residue chain is Ribosomal RNA large subunit methyltransferase K/L (702 aa).

Residues 43–154 (LVYQSLMWSR…KETASIALDL (112 aa)) enclose the THUMP domain.

Belongs to the methyltransferase superfamily. RlmKL family.

It is found in the cytoplasm. The enzyme catalyses guanosine(2445) in 23S rRNA + S-adenosyl-L-methionine = N(2)-methylguanosine(2445) in 23S rRNA + S-adenosyl-L-homocysteine + H(+). It catalyses the reaction guanosine(2069) in 23S rRNA + S-adenosyl-L-methionine = N(2)-methylguanosine(2069) in 23S rRNA + S-adenosyl-L-homocysteine + H(+). Functionally, specifically methylates the guanine in position 2445 (m2G2445) and the guanine in position 2069 (m7G2069) of 23S rRNA. The polypeptide is Ribosomal RNA large subunit methyltransferase K/L (Shigella boydii serotype 18 (strain CDC 3083-94 / BS512)).